Here is a 398-residue protein sequence, read N- to C-terminus: Energy-coupling factor transporter ATP-binding protein EcfA2 (398 aa).

Residues 5–240 form the ABC transporter domain; it reads IELKDLEYAY…KELVRRARLK (236 aa). Position 38–45 (38–45) interacts with ATP; the sequence is GSNGAGKS.

The protein belongs to the ABC transporter superfamily. Energy-coupling factor EcfA family. As to quaternary structure, forms a stable energy-coupling factor (ECF) transporter complex composed of 2 membrane-embedded substrate-binding proteins (S component), 2 ATP-binding proteins (A component) and 2 transmembrane proteins (T component).

It localises to the cell membrane. ATP-binding (A) component of a common energy-coupling factor (ECF) ABC-transporter complex. Unlike classic ABC transporters this ECF transporter provides the energy necessary to transport a number of different substrates. The sequence is that of Energy-coupling factor transporter ATP-binding protein EcfA2 from Methanospirillum hungatei JF-1 (strain ATCC 27890 / DSM 864 / NBRC 100397 / JF-1).